The chain runs to 89 residues: Small ribosomal subunit protein uS14 (89 aa).

It belongs to the universal ribosomal protein uS14 family. Part of the 30S ribosomal subunit. Contacts proteins S3 and S10.

Binds 16S rRNA, required for the assembly of 30S particles and may also be responsible for determining the conformation of the 16S rRNA at the A site. The chain is Small ribosomal subunit protein uS14 from Aster yellows witches'-broom phytoplasma (strain AYWB).